Consider the following 616-residue polypeptide: MPKYRSATTTHGRNMAGARALWRATGMTDSDFGKPIIAVVNSFTQFVPGHVHLRDLGKLVAEQIEASGGVAKEFNTIAVDDGIAMGHGGMLYSLPSRELIADSVEYMVNAHCADAMVCISNCDKITPGMLMASLRLNIPVIFVSGGPMEAGKTKLSDQIIKLDLVDAMIQGADPKVSDDQSNQVERSACPTCGSCSGMFTANSMNCLTEALGLSQPGNGSLLATHADRKQLFLNAGKRIVELTKRYYEQDDESALPRNIANKAAFENAMTLDIAMGGSTNTVLHLLAAAQEAEIDFTMSDIDKLSRKVPQLCKVAPSTQKYHMEDVHRAGGVLGILGELDRAGLLNRNVKNVLGLTLPQTLEQYDITVTQDEAVKKMFRAGPAGIRTTQAFSQDCRWDSLDDDRAAGCIRSLEYAYSKDGGLAVLYGNFAENGCIVKTAGVDDSILKFTGPAKVYESQDDAVEAILGGKVVEGDVVVIRYEGPKGGPGMQEMLYPTSFLKSMGLGKACALITDGRFSGGTSGLSIGHVSPEAASGGTIALIEDGDTIAIDIPNRSIQLQLSEAEIAARREAQEARGDKAWTPKNRQRQVSFALRAYASLATSADKGAVRDKSKLGG.

D81 provides a ligand contact to Mg(2+). C122 is a [2Fe-2S] cluster binding site. Residues D123 and K124 each contribute to the Mg(2+) site. The residue at position 124 (K124) is an N6-carboxylysine. C195 lines the [2Fe-2S] cluster pocket. E491 is a binding site for Mg(2+). Residue S517 is the Proton acceptor of the active site.

It belongs to the IlvD/Edd family. Homodimer. Requires [2Fe-2S] cluster as cofactor. Mg(2+) is required as a cofactor.

It catalyses the reaction (2R)-2,3-dihydroxy-3-methylbutanoate = 3-methyl-2-oxobutanoate + H2O. The catalysed reaction is (2R,3R)-2,3-dihydroxy-3-methylpentanoate = (S)-3-methyl-2-oxopentanoate + H2O. The protein operates within amino-acid biosynthesis; L-isoleucine biosynthesis; L-isoleucine from 2-oxobutanoate: step 3/4. Its pathway is amino-acid biosynthesis; L-valine biosynthesis; L-valine from pyruvate: step 3/4. In terms of biological role, functions in the biosynthesis of branched-chain amino acids. Catalyzes the dehydration of (2R,3R)-2,3-dihydroxy-3-methylpentanoate (2,3-dihydroxy-3-methylvalerate) into 2-oxo-3-methylpentanoate (2-oxo-3-methylvalerate) and of (2R)-2,3-dihydroxy-3-methylbutanoate (2,3-dihydroxyisovalerate) into 2-oxo-3-methylbutanoate (2-oxoisovalerate), the penultimate precursor to L-isoleucine and L-valine, respectively. The protein is Dihydroxy-acid dehydratase of Salmonella paratyphi A (strain ATCC 9150 / SARB42).